The primary structure comprises 248 residues: Probable transcriptional regulatory protein PP_1214 (248 aa).

The segment at 1-21 (MAGHSKWANIKHRKERQDAKR) is disordered.

The protein belongs to the TACO1 family.

The protein resides in the cytoplasm. The chain is Probable transcriptional regulatory protein PP_1214 from Pseudomonas putida (strain ATCC 47054 / DSM 6125 / CFBP 8728 / NCIMB 11950 / KT2440).